Consider the following 325-residue polypeptide: 2-dehydro-3-deoxygluconokinase (325 aa).

Substrate-binding positions include 49-53 (GSEAN), Tyr-105, 121-123 (YYR), and Arg-181. ATP contacts are provided by residues 179-181 (NIR), 240-245 (KLGAEG), and 269-272 (GAGD). The substrate site is built by Asp-272 and Asp-308. Asp-272 acts as the Proton acceptor in catalysis.

Belongs to the carbohydrate kinase PfkB family. In terms of assembly, homohexamer; trimer of dimers.

The catalysed reaction is 2-dehydro-3-deoxy-D-gluconate + ATP = 2-dehydro-3-deoxy-6-phospho-D-gluconate + ADP + H(+). It participates in carbohydrate acid metabolism; 2-dehydro-3-deoxy-D-gluconate degradation; D-glyceraldehyde 3-phosphate and pyruvate from 2-dehydro-3-deoxy-D-gluconate: step 1/2. Functionally, involved in the degradation of glucose via the semi-phosphorylative Entner-Doudoroff pathway. Catalyzes the phosphorylation of 2-keto-3-deoxygluconate (KDG) yielding 2-keto-3-deoxy-6-phosphogluconate (KDPG). The protein is 2-dehydro-3-deoxygluconokinase (kdgK) of Thermoproteus tenax.